A 478-amino-acid polypeptide reads, in one-letter code: Major facilitator superfamily domain-containing protein 12 (478 aa).

An N-acetylmethionine modification is found at Met1. At 1–26 (MVPGSPAAGAGPAPRALSLAARLSYA) the chain is on the cytoplasmic side. A helical transmembrane segment spans residues 27–47 (VGHFLNDLCASMWFTYLLLYL). Residues 48–56 (HSVRAYSSR) lie on the Lumenal side of the membrane. The chain crosses the membrane as a helical span at residues 57-77 (GAGLLLLLGQVADGLCTPLVG). Topologically, residues 78–97 (YEADRAAGRCARCGPRKAWH) are cytoplasmic. A helical transmembrane segment spans residues 98-118 (LVGTVCVLLSFPFIFSPCLGC). Over 119-124 (GAATPE) the chain is Lumenal. Residues 125–145 (WAALLYYGPFIVVFQFGWAAT) traverse the membrane as a helical segment. Residues 146-168 (QIAHLSLIPELVTSDHEKVELTA) lie on the Cytoplasmic side of the membrane. The chain crosses the membrane as a helical span at residues 169-189 (LRYAFTVVANITVFGAAWLLL). The Lumenal segment spans residues 190 to 216 (RLQGSAREGPPDEAGDHLGVQDVPVFR). The chain crosses the membrane as a helical span at residues 217-237 (TLSLCVVGVGAVFSLLFHLGT). Residues 238–277 (RERRRPPAQEPDERSPLLAPATARPLLLWKHWLREPSFYQ) lie on the Cytoplasmic side of the membrane. A helical transmembrane segment spans residues 278–300 (VGLLYMSTRLIVNLSQTYIAMYL). Topologically, residues 301 to 308 (TYSLNLPK) are lumenal. Residues 309 to 329 (KFIATIPLVMYVSGFCSSFLM) form a helical membrane-spanning segment. The Cytoplasmic portion of the chain corresponds to 330-338 (KPVNKCIGR). Residues 339–359 (NMTYFVGLLVILAFAAWVVLV) form a helical membrane-spanning segment. The Lumenal portion of the chain corresponds to 360–361 (DE). The chain crosses the membrane as a helical span at residues 362-382 (LGMAVYVAAVLLGGGCATILV). Over 383–400 (TSLAMTADLIGPHTHSGA) the chain is Cytoplasmic. Residues 401 to 421 (FVYGAMSFSDKVANGLAVMVI) traverse the membrane as a helical segment. Over 422-436 (QSLHPCSLELCCRAC) the chain is Lumenal. The chain crosses the membrane as a helical span at residues 437-457 (VGFYHWVMVAVTGGVGVAATL). The Cytoplasmic segment spans residues 458 to 478 (SLCSLLVWPIRLRSWDPGAQP).

This sequence belongs to the major facilitator superfamily.

The protein localises to the melanosome membrane. Its subcellular location is the lysosome membrane. It carries out the reaction L-cysteine(in) = L-cysteine(out). Transporter that mediates the import of cysteine into melanosomes, thereby regulating skin/hair pigmentation. In melanosomes, cysteine import is required both for normal levels of cystine, the oxidized dimer of cysteine, and provide cysteine for the production of the cysteinyldopas used in pheomelanin synthesis, thereby regulating skin/hair pigmentation. Also catalyzes import of cysteine into lysosomes in non-pigmented cells, regulating lysosomal cystine and cysteine storage, which is essnetial for redox homeostasis. This is Major facilitator superfamily domain-containing protein 12 from Equus caballus (Horse).